The chain runs to 556 residues: Urocanate hydratase (556 aa).

NAD(+) contacts are provided by residues Gly52–Gly53, Gln130, Gly176–Gly178, Glu196, Arg201, Asn242–Ala243, Gln263–His267, Tyr273–Leu274, and Tyr322. The active site involves Cys410. Residue Gly492 coordinates NAD(+).

This sequence belongs to the urocanase family. The cofactor is NAD(+).

Its subcellular location is the cytoplasm. It carries out the reaction 4-imidazolone-5-propanoate = trans-urocanate + H2O. It functions in the pathway amino-acid degradation; L-histidine degradation into L-glutamate; N-formimidoyl-L-glutamate from L-histidine: step 2/3. Its function is as follows. Catalyzes the conversion of urocanate to 4-imidazolone-5-propionate. The protein is Urocanate hydratase of Shewanella oneidensis (strain ATCC 700550 / JCM 31522 / CIP 106686 / LMG 19005 / NCIMB 14063 / MR-1).